A 604-amino-acid polypeptide reads, in one-letter code: Ectonucleoside triphosphate diphosphohydrolase 7 (604 aa).

At 1-28 (MARISFSYLCPASWYFTVPTVSPFLRQR) the chain is on the cytoplasmic side. The chain crosses the membrane as a helical span at residues 29–49 (VAFLGLFFISCLLLLMLIIDF). Topologically, residues 50–546 (RHWSASLPRD…QAHGSWFRLS (497 aa)) are vesicular. The Proton acceptor role is filled by Glu217. A glycan (N-linked (GlcNAc...) asparagine) is linked at Asn330. Cys448 and Cys477 are disulfide-bonded. The helical transmembrane segment at 547 to 567 (FVYNHYLFFACILVVLLAIFL) threads the bilayer. The Cytoplasmic portion of the chain corresponds to 568-604 (YLLRLRRIHHRQTRASAPLDLLWLEEVVPMMGVQVGP).

Belongs to the GDA1/CD39 NTPase family. Requires Ca(2+) as cofactor. Mg(2+) is required as a cofactor.

Its subcellular location is the cytoplasmic vesicle membrane. The enzyme catalyses a ribonucleoside 5'-triphosphate + H2O = a ribonucleoside 5'-diphosphate + phosphate + H(+). The catalysed reaction is UTP + H2O = UDP + phosphate + H(+). It carries out the reaction GTP + H2O = GDP + phosphate + H(+). It catalyses the reaction CTP + H2O = CDP + phosphate + H(+). Its function is as follows. Catalyzes the hydrolysis of nucleoside triphosphates and diphosphates in a calcium- or magnesium-dependent manner. Preferentially hydrolyzes nucleoside 5'-triphosphates, with substrate preference for UTP &gt; GTP &gt; CTP. Hydrolyzes ATP and nucleoside diphosphates only to a minor extent. The protein is Ectonucleoside triphosphate diphosphohydrolase 7 (ENTPD7) of Homo sapiens (Human).